A 718-amino-acid chain; its full sequence is Probable protein S-acyltransferase 19 (718 aa).

A run of 2 helical transmembrane segments spans residues 16–36 (VVAITVFCLLSVAYYAFFAPF) and 41–61 (IWEYILLGVYSPVALIVFVLY). The disordered stretch occupies residues 100–125 (ETGSHLQSSPSVASRTSTLPNSSVKG). The segment covering 103–124 (SHLQSSPSVASRTSTLPNSSVK) has biased composition (polar residues). Residues 174–224 (LFCTLCNAEVRKFSKHCRSCDKCVDCFDHHCRWLNNCVGRKNYMTFISLMA) enclose the DHHC domain. Cys204 serves as the catalytic S-palmitoyl cysteine intermediate. 2 helical membrane-spanning segments follow: residues 222–242 (LMAVSLLWLLIEAGVGIAVIV) and 277–297 (AVSMLALFPLGELFFFHMLLI). Disordered stretches follow at residues 454-511 (SSVS…HVHE), 598-649 (PATT…QQQQ), and 664-718 (GPLV…GTRK). Composition is skewed to polar residues over residues 479–488 (CRNSYAPSQG) and 598–626 (PATTSEPRTRFSSQNQPIPSSHMGNTQNP). A compositionally biased stretch (basic and acidic residues) spans 673-687 (DGLRHDGDSGREGQD).

The protein belongs to the DHHC palmitoyltransferase family.

It is found in the cell membrane. It carries out the reaction L-cysteinyl-[protein] + hexadecanoyl-CoA = S-hexadecanoyl-L-cysteinyl-[protein] + CoA. Functionally, palmitoyl acyltransferase. The polypeptide is Probable protein S-acyltransferase 19 (PAT19) (Arabidopsis thaliana (Mouse-ear cress)).